The chain runs to 220 residues: MGQKINPLGFRLGTTQSHHSFWFAQPKNYYKGIQEDQKIRDFIKNYVKNNIIISPDTEGIAYIEIQKRIDFLKIMIFIGFKKFLIENRQLGIIKEALHIDLKKNFHYVNRKLIIDIIRITKPYRNPNILAEFIADQLKNRVSFRKTMKKAIELTESEDTKGIQVQISGRIDGKEIARVEWIREGRVPLQTIQAKINYCSYMVRTTHGVLGIKIWIFIEKE.

Residues 39–120 (IRDFIKNYVK…KLIIDIIRIT (82 aa)) enclose the KH type-2 domain.

Belongs to the universal ribosomal protein uS3 family. In terms of assembly, part of the 30S ribosomal subunit.

It is found in the plastid. The polypeptide is Small ribosomal subunit protein uS3c (rps3) (Epifagus virginiana (Beechdrops)).